A 416-amino-acid chain; its full sequence is uncharacterized protein (416 aa).

The N-acetyltransferase domain maps to 3–150 (LDVRTITPSE…SVYRAGLDAR (148 aa)). Acetyl-CoA contacts are provided by residues 83–85 (VTV) and 91–96 (RRGLLS). Y124 acts as the Proton donor in catalysis. The Proton acceptor; via carboxylate role is filled by F416.

This sequence belongs to the acetyltransferase Eis family. Homohexamer; trimer of dimers.

This is an uncharacterized protein from Streptomyces griseus subsp. griseus (strain JCM 4626 / CBS 651.72 / NBRC 13350 / KCC S-0626 / ISP 5235).